A 119-amino-acid chain; its full sequence is Large ribosomal subunit protein uL22 (119 aa).

This sequence belongs to the universal ribosomal protein uL22 family. As to quaternary structure, part of the 50S ribosomal subunit.

In terms of biological role, this protein binds specifically to 23S rRNA; its binding is stimulated by other ribosomal proteins, e.g. L4, L17, and L20. It is important during the early stages of 50S assembly. It makes multiple contacts with different domains of the 23S rRNA in the assembled 50S subunit and ribosome. Its function is as follows. The globular domain of the protein is located near the polypeptide exit tunnel on the outside of the subunit, while an extended beta-hairpin is found that lines the wall of the exit tunnel in the center of the 70S ribosome. The sequence is that of Large ribosomal subunit protein uL22 from Chlorobium chlorochromatii (strain CaD3).